The chain runs to 505 residues: COMPASS component BRE2 (505 aa).

Residues 70–295 (SANPFFTILG…LKQETTNKEF (226 aa)) enclose the B30.2/SPRY domain. Ser227 carries the post-translational modification Phosphoserine. Residues 271–290 (EPWREDAENGPSRKKLKQET) are disordered. Lys318 provides a ligand contact to DNA. Residues 398–420 (RDESNDKNTTSAKKKKQQQKKKK) are disordered. A compositionally biased stretch (basic residues) spans 409 to 420 (AKKKKQQQKKKK).

Belongs to the cclA family. Component of the Set1C/COMPASS complex which consists of SET1(2), BRE2(2), SPP1(2), SDC1(1), SHG1(1), SWD1(1), SWD2(1), and SWD3(1). Interacts directly with SDC1.

It localises to the nucleus. It is found in the chromosome. Its subcellular location is the telomere. Component of the Set1C/COMPASS complex that specifically mono-, di- and trimethylates histone H3 to form H3K4me1/2/3, which subsequently plays a role in telomere length maintenance and transcription elongation regulation. COMPASS recognizes ubiquitinated H2B on one face of the nucleosome which stimulates the methylation of H3 on the opposing face. The chain is COMPASS component BRE2 from Saccharomyces cerevisiae (strain ATCC 204508 / S288c) (Baker's yeast).